The following is a 225-amino-acid chain: Ribonuclease 3 (225 aa).

The region spanning 7–129 (IPRLCRTLGY…IIGAIYLDSD (123 aa)) is the RNase III domain. A Mg(2+)-binding site is contributed by glutamate 42. Aspartate 46 is an active-site residue. Aspartate 115 and glutamate 118 together coordinate Mg(2+). The active site involves glutamate 118. Positions 155–225 (DPKTLLQEYL…AAQVLELIKK (71 aa)) constitute a DRBM domain.

It belongs to the ribonuclease III family. In terms of assembly, homodimer. The cofactor is Mg(2+).

The protein resides in the cytoplasm. The enzyme catalyses Endonucleolytic cleavage to 5'-phosphomonoester.. Functionally, digests double-stranded RNA. Involved in the processing of primary rRNA transcript to yield the immediate precursors to the large and small rRNAs (23S and 16S). Processes some mRNAs, and tRNAs when they are encoded in the rRNA operon. Processes pre-crRNA and tracrRNA of type II CRISPR loci if present in the organism. This is Ribonuclease 3 from Shewanella pealeana (strain ATCC 700345 / ANG-SQ1).